A 791-amino-acid chain; its full sequence is Centrosomal protein of 89 kDa (791 aa).

The interval 27 to 203 (APKPAVPRTP…HTQQKDVKHS (177 aa)) is disordered. Over residues 30–45 (PAVPRTPPPRSPNPSP) the composition is skewed to pro residues. The residue at position 50 (Ser50) is a Phosphoserine. The segment covering 50–62 (SALAAAILATTLT) has biased composition (low complexity). Basic and acidic residues predominate over residues 75-89 (SRSESDASDIEKDSF). The segment covering 94–107 (ATTSELRLRQSWQN) has biased composition (polar residues). The segment covering 137-161 (RESESTWKDVGDGRDATYTVPHRDQ) has biased composition (basic and acidic residues). Residues 181–190 (SDSSSSSSSS) show a composition bias toward low complexity. Coiled-coil stretches lie at residues 252–291 (SANQ…TEKA), 370–598 (LLAY…MGKE), and 670–737 (HRLK…SLLQ).

The protein localises to the cytoplasm. It is found in the cytosol. The protein resides in the cytoskeleton. It localises to the microtubule organizing center. Its subcellular location is the centrosome. The protein localises to the spindle pole. It is found in the centriole. The protein resides in the mitochondrion intermembrane space. In terms of biological role, required for ciliogenesis. Also plays a role in mitochondrial metabolism where it may modulate complex IV activity. This is Centrosomal protein of 89 kDa (Cep89) from Mus musculus (Mouse).